Consider the following 418-residue polypeptide: Putative ion-transport protein YfeO (418 aa).

Transmembrane regions (helical) follow at residues 10-30 (LLLS…LIVV), 54-74 (DSPF…GLVI), 99-119 (ALPG…SLGP), 120-140 (EHPI…RLLP), 149-169 (ILAS…AALI), 186-206 (LFAP…FFHP), 223-243 (ILSG…AVWC), 258-278 (VLML…AGPV), 300-320 (DYFL…ASGF), 322-342 (GGRI…LHEH), 343-363 (VPAV…VLVV), and 371-391 (LFMA…CIVM).

Belongs to the chloride channel (TC 2.A.49) family.

The protein resides in the cell membrane. The sequence is that of Putative ion-transport protein YfeO from Escherichia coli O7:K1 (strain IAI39 / ExPEC).